The sequence spans 495 residues: MTFPGDTAVLVLAAGPGTRMRSDTPKVLHTLAGRSMLSHVLHAIAKLAPQRLIVVLGHDHQRIAPLVGELADTLGRTIDVALQDRPLGTGHAVLCGLSALPDDYAGNVVVTSGDTPLLDADTLADLIATHRAVSAAVTVLTTTLDDPFGYGRILRTQDHEVMAIVEQTDATPSQREIREVNAGVYAFDIAALRSALSRLSSNNAQQELYLTDVIAILRSDGQTVHASHVDDSALVAGVNNRVQLAELASELNRRVVAAHQLAGVTVVDPATTWIDVDVTIGRDTVIHPGTQLLGRTQIGGRCVVGPDTTLTDVAVGDGASVVRTHGSSSSIGDGAAVGPFTYLRPGTALGADGKLGAFVEVKNSTIGTGTKVPHLTYVGDADIGEYSNIGASSVFVNYDGTSKRRTTVGSHVRTGSDTMFVAPVTIGDGAYTGAGTVVREDVPPGALAVSAGPQRNIENWVQRKRPGSPAAQASKRASEMACQQPTQPPDADQTP.

The tract at residues 1–241 (MTFPGDTAVL…SALVAGVNNR (241 aa)) is pyrophosphorylase. UDP-N-acetyl-alpha-D-glucosamine contacts are provided by residues 12-15 (LAAG), K26, Q83, 88-89 (GT), 112-114 (SGD), G151, E166, N181, and N239. Residue D114 participates in Mg(2+) binding. Mg(2+) is bound at residue N239. Positions 242–262 (VQLAELASELNRRVVAAHQLA) are linker. The tract at residues 263 to 495 (GVTVVDPATT…TQPPDADQTP (233 aa)) is N-acetyltransferase. R344 and K362 together coordinate UDP-N-acetyl-alpha-D-glucosamine. The active-site Proton acceptor is the H374. Y377 and N388 together coordinate UDP-N-acetyl-alpha-D-glucosamine. Residues A391, 397–398 (NY), S416, and A434 contribute to the acetyl-CoA site. The tract at residues 457–495 (IENWVQRKRPGSPAAQASKRASEMACQQPTQPPDADQTP) is disordered. Over residues 483–495 (QQPTQPPDADQTP) the composition is skewed to low complexity.

The protein in the N-terminal section; belongs to the N-acetylglucosamine-1-phosphate uridyltransferase family. In the C-terminal section; belongs to the transferase hexapeptide repeat family. As to quaternary structure, homotrimer. The cofactor is Mg(2+).

It localises to the cytoplasm. It carries out the reaction alpha-D-glucosamine 1-phosphate + acetyl-CoA = N-acetyl-alpha-D-glucosamine 1-phosphate + CoA + H(+). The catalysed reaction is N-acetyl-alpha-D-glucosamine 1-phosphate + UTP + H(+) = UDP-N-acetyl-alpha-D-glucosamine + diphosphate. It functions in the pathway nucleotide-sugar biosynthesis; UDP-N-acetyl-alpha-D-glucosamine biosynthesis; N-acetyl-alpha-D-glucosamine 1-phosphate from alpha-D-glucosamine 6-phosphate (route II): step 2/2. Its pathway is nucleotide-sugar biosynthesis; UDP-N-acetyl-alpha-D-glucosamine biosynthesis; UDP-N-acetyl-alpha-D-glucosamine from N-acetyl-alpha-D-glucosamine 1-phosphate: step 1/1. The protein operates within bacterial outer membrane biogenesis; LPS lipid A biosynthesis. Functionally, catalyzes the last two sequential reactions in the de novo biosynthetic pathway for UDP-N-acetylglucosamine (UDP-GlcNAc). The C-terminal domain catalyzes the transfer of acetyl group from acetyl coenzyme A to glucosamine-1-phosphate (GlcN-1-P) to produce N-acetylglucosamine-1-phosphate (GlcNAc-1-P), which is converted into UDP-GlcNAc by the transfer of uridine 5-monophosphate (from uridine 5-triphosphate), a reaction catalyzed by the N-terminal domain. This chain is Bifunctional protein GlmU, found in Mycobacterium tuberculosis (strain ATCC 25177 / H37Ra).